A 274-amino-acid polypeptide reads, in one-letter code: Kit ligand (274 aa).

The signal sequence occupies residues 1-25; that stretch reads MKKTQTWIITCIYLQLLLFNPLVRT. Position 26 is a pyrrolidone carboxylic acid (glutamine 26). Residues 26–215 lie on the Extracellular side of the membrane; that stretch reads QGICRNRVTD…SDSIEDSSLQ (190 aa). 2 disulfides stabilise this stretch: cysteine 29-cysteine 114 and cysteine 68-cysteine 164. 4 N-linked (GlcNAc...) asparagine glycosylation sites follow: asparagine 90, asparagine 97, asparagine 145, and asparagine 196. Residues 216-238 traverse the membrane as a helical segment; that stretch reads WAAVALPAFFSLVIGFAFGALYW. Residues 239–274 lie on the Cytoplasmic side of the membrane; sequence KKKQPNLTRTVENIQINEEDNEISMLQEKEREFQEV.

The protein belongs to the SCF family. Homodimer, non-covalently linked. Heterotetramer with KIT, binding two KIT molecules; thereby mediates KIT dimerization and subsequent activation by autophosphorylation. A soluble form is produced by proteolytic processing of the extracellular domain.

The protein localises to the cytoplasm. Its subcellular location is the cytoskeleton. It is found in the cell membrane. It localises to the cell projection. The protein resides in the lamellipodium. The protein localises to the filopodium. Its subcellular location is the secreted. In terms of biological role, ligand for the receptor-type protein-tyrosine kinase KIT. Plays an essential role in the regulation of cell survival and proliferation, hematopoiesis, stem cell maintenance, gametogenesis, mast cell development, migration and function, and in melanogenesis. KITLG/SCF binding can activate several signaling pathways. Promotes phosphorylation of PIK3R1, the regulatory subunit of phosphatidylinositol 3-kinase, and subsequent activation of the kinase AKT1. KITLG/SCF and KIT also transmit signals via GRB2 and activation of RAS, RAF1 and the MAP kinases MAPK1/ERK2 and/or MAPK3/ERK1. KITLG/SCF and KIT promote activation of STAT family members STAT1, STAT3 and STAT5. KITLG/SCF and KIT promote activation of PLCG1, leading to the production of the cellular signaling molecules diacylglycerol and inositol 1,4,5-trisphosphate. KITLG/SCF acts synergistically with other cytokines, probably interleukins. This is Kit ligand (KITLG) from Sus scrofa (Pig).